The sequence spans 280 residues: Phosphatidylserine decarboxylase proenzyme (280 aa).

Active-site charge relay system; for autoendoproteolytic cleavage activity residues include Asp-88, His-145, and Ser-249. The active-site Schiff-base intermediate with substrate; via pyruvic acid; for decarboxylase activity is the Ser-249. Position 249 is a pyruvic acid (Ser); by autocatalysis (Ser-249).

This sequence belongs to the phosphatidylserine decarboxylase family. PSD-B subfamily. Prokaryotic type I sub-subfamily. Heterodimer of a large membrane-associated beta subunit and a small pyruvoyl-containing alpha subunit. Requires pyruvate as cofactor. Is synthesized initially as an inactive proenzyme. Formation of the active enzyme involves a self-maturation process in which the active site pyruvoyl group is generated from an internal serine residue via an autocatalytic post-translational modification. Two non-identical subunits are generated from the proenzyme in this reaction, and the pyruvate is formed at the N-terminus of the alpha chain, which is derived from the carboxyl end of the proenzyme. The autoendoproteolytic cleavage occurs by a canonical serine protease mechanism, in which the side chain hydroxyl group of the serine supplies its oxygen atom to form the C-terminus of the beta chain, while the remainder of the serine residue undergoes an oxidative deamination to produce ammonia and the pyruvoyl prosthetic group on the alpha chain. During this reaction, the Ser that is part of the protease active site of the proenzyme becomes the pyruvoyl prosthetic group, which constitutes an essential element of the active site of the mature decarboxylase.

It localises to the cell membrane. It catalyses the reaction a 1,2-diacyl-sn-glycero-3-phospho-L-serine + H(+) = a 1,2-diacyl-sn-glycero-3-phosphoethanolamine + CO2. Its pathway is phospholipid metabolism; phosphatidylethanolamine biosynthesis; phosphatidylethanolamine from CDP-diacylglycerol: step 2/2. Functionally, catalyzes the formation of phosphatidylethanolamine (PtdEtn) from phosphatidylserine (PtdSer). The chain is Phosphatidylserine decarboxylase proenzyme from Chromobacterium violaceum (strain ATCC 12472 / DSM 30191 / JCM 1249 / CCUG 213 / NBRC 12614 / NCIMB 9131 / NCTC 9757 / MK).